The sequence spans 347 residues: Olfactory receptor 1L6 (347 aa).

At 1-62 (MSYFYRLKLM…GLSSNPQLQK (62 aa)) the chain is on the extracellular side. N-linked (GlcNAc...) asparagine glycosylation occurs at Asn-41. The helical transmembrane segment at 63–86 (PLFAIFLIMYLLAAVGNVLIIPAI) threads the bilayer. At 87-94 (YSDPRLHT) the chain is on the cytoplasmic side. A helical transmembrane segment spans residues 95–116 (PMYFFLSNLSFMDICFTTVIVP). At 117 to 137 (KMLVNFLSETKVISYVGCLAQ) the chain is on the extracellular side. Cysteines 134 and 226 form a disulfide. Residues 138 to 157 (MYFFMAFGNTDSYLLASMAI) form a helical membrane-spanning segment. Topologically, residues 158 to 176 (DRLVAICNPLHYDVVMKPR) are cytoplasmic. A helical membrane pass occupies residues 177–195 (HCLLMLLGSCSISHLHSLF). Over 196–233 (RVLLMSRLSFCASHIIKHFFCDTQPVLKLSCSDTSSSQ) the chain is Extracellular. A helical transmembrane segment spans residues 234–256 (MVVMTETLAVIVTPFLCIIFSYL). Residues 257–273 (RIMVTVLRIPSAAGKWK) are Cytoplasmic-facing. The chain crosses the membrane as a helical span at residues 274–296 (AFSTCGSHLTAVALFYGSIIYVY). Residues 297–309 (FRPLSMYSVVRDR) are Extracellular-facing. A helical membrane pass occupies residues 310–329 (VATVMYTVVTPMLNPFIYSL). Topologically, residues 330–347 (RNKDMKRGLKKLQDRIYR) are cytoplasmic.

This sequence belongs to the G-protein coupled receptor 1 family.

Its subcellular location is the cell membrane. Its function is as follows. Odorant receptor. In Homo sapiens (Human), this protein is Olfactory receptor 1L6 (OR1L6).